Reading from the N-terminus, the 387-residue chain is Cysteine desulfurase IscS (387 aa).

Pyridoxal 5'-phosphate contacts are provided by residues 73–74, Asn-155, Gln-183, and 203–205; these read AT and SAH. Lys-206 bears the N6-(pyridoxal phosphate)lysine mark. Position 241 (Thr-241) interacts with pyridoxal 5'-phosphate. Cys-328 acts as the Cysteine persulfide intermediate in catalysis. Position 328 (Cys-328) interacts with [2Fe-2S] cluster.

It belongs to the class-V pyridoxal-phosphate-dependent aminotransferase family. NifS/IscS subfamily. As to quaternary structure, homodimer. Forms a heterotetramer with IscU, interacts with other sulfur acceptors. Requires pyridoxal 5'-phosphate as cofactor.

Its subcellular location is the cytoplasm. The enzyme catalyses (sulfur carrier)-H + L-cysteine = (sulfur carrier)-SH + L-alanine. Its pathway is cofactor biosynthesis; iron-sulfur cluster biosynthesis. Functionally, master enzyme that delivers sulfur to a number of partners involved in Fe-S cluster assembly, tRNA modification or cofactor biosynthesis. Catalyzes the removal of elemental sulfur atoms from cysteine to produce alanine. Functions as a sulfur delivery protein for Fe-S cluster synthesis onto IscU, an Fe-S scaffold assembly protein, as well as other S acceptor proteins. This is Cysteine desulfurase IscS from Helicobacter pylori (strain Shi470).